The primary structure comprises 296 residues: Formylmethanofuran--tetrahydromethanopterin formyltransferase (296 aa).

This sequence belongs to the FTR family. In terms of assembly, homotetramer composed of two dimers. Dimerization is sufficient for enzyme activity, but tetramerization is required for high thermostability.

The protein localises to the cytoplasm. The enzyme catalyses N-formylmethanofuran + 5,6,7,8-tetrahydromethanopterin + H(+) = N(5)-formyl-5,6,7,8-tetrahydromethanopterin + methanofuran. The protein operates within one-carbon metabolism; methanogenesis from CO(2); 5,10-methenyl-5,6,7,8-tetrahydromethanopterin from CO(2): step 2/3. With respect to regulation, requires high salt concentrations for activity and thermostability; 1.5-1.8 M KH(2)PO(4) stimulates activity while stabilizing the enzyme. In terms of biological role, catalyzes the reversible transfer of a formyl group from formylmethanofuran (formyl-MFR) to tetrahydromethanopterin (H(4)MPT) to produce 5-formyl tetrahydromethanopterin (5-formyl-H(4)MPT) and methanofuran (MFR). Acts via a ternary-complex mechanism. Uses N-furfurylformamide much less efficiently, does not use N-methylformamide or formamide. Protein overexpressed in E.coli has very similar properties to enzyme purified from M.kandleri. In Methanopyrus kandleri (strain AV19 / DSM 6324 / JCM 9639 / NBRC 100938), this protein is Formylmethanofuran--tetrahydromethanopterin formyltransferase.